The chain runs to 390 residues: Succinate--CoA ligase [ADP-forming] subunit beta (390 aa).

In terms of domain architecture, ATP-grasp spans 9–245 (KHLLKKYNIP…TTQEDEHETM (237 aa)). ATP contacts are provided by residues K46, 53 to 55 (GRG), E99, S102, and E107. N200 and D214 together coordinate Mg(2+). Substrate is bound by residues N265 and 322 to 324 (GIV).

It belongs to the succinate/malate CoA ligase beta subunit family. In terms of assembly, heterotetramer of two alpha and two beta subunits. The cofactor is Mg(2+).

It carries out the reaction succinate + ATP + CoA = succinyl-CoA + ADP + phosphate. The catalysed reaction is GTP + succinate + CoA = succinyl-CoA + GDP + phosphate. It participates in carbohydrate metabolism; tricarboxylic acid cycle; succinate from succinyl-CoA (ligase route): step 1/1. In terms of biological role, succinyl-CoA synthetase functions in the citric acid cycle (TCA), coupling the hydrolysis of succinyl-CoA to the synthesis of either ATP or GTP and thus represents the only step of substrate-level phosphorylation in the TCA. The beta subunit provides nucleotide specificity of the enzyme and binds the substrate succinate, while the binding sites for coenzyme A and phosphate are found in the alpha subunit. This is Succinate--CoA ligase [ADP-forming] subunit beta from Coxiella burnetii (strain Dugway 5J108-111).